We begin with the raw amino-acid sequence, 613 residues long: Immunoglobulin superfamily member 8 (613 aa).

Positions 1–27 (MGALRPTLLPPSLPLLLLLMLGMGCWA) are cleaved as a signal peptide. 4 consecutive Ig-like C2-type domains span residues 28 to 149 (REVL…LRVL), 162 to 286 (PRGR…WAQI), 303 to 424 (SQLA…EAAS), and 431 to 560 (PVHV…WYQA). Residues 28-579 (REVLVPEGPL…VYPYMHALDT (552 aa)) are Extracellular-facing. Residues C49 and C127 are joined by a disulfide bond. N50 carries an N-linked (GlcNAc...) asparagine glycan. Residues 155-174 (VSAAPPGPRGRQAPTSPPRM) form a disordered region. A disulfide bridge connects residues C186 and C270. An EWI motif motif is present at residues 274 to 276 (EWI). 2 cysteine pairs are disulfide-bonded: C326–C406 and C462–C544. N-linked (GlcNAc...) asparagine glycosylation is found at N327 and N463. S518 carries the phosphoserine modification. The chain crosses the membrane as a helical span at residues 580 to 600 (LFVPLLVGTGVALVTGATVLG). Over 601 to 613 (TITCCFMKRLRKR) the chain is Cytoplasmic. 2 S-palmitoyl cysteine lipidation sites follow: C604 and C605.

Interacts directly with CD82, CD81/tetraspanin-28 and CD9/tetraspanin-29. Also interacts with integrin alpha-3/beta-1 and integrin alpha-4/beta-1. Interacts with HSPA8; this interaction modulates migratory and antigen-presenting capacities of dendritic cells. Expressed in brain, kidney, testis, liver and placenta with moderate expression in all other tissues. Detected on a majority of B-cells, T-cells, and natural killer cells. Expressed on dendritic cells.

The protein localises to the cell membrane. Its function is as follows. Member of the immunoglobulin superfamily (IgSF) that links tetraspanin-enriched microdomains to the actin cytoskeleton and plays several important roles in innate and adaptive immunity. Acts as an inducible receptor of HSPA8 on dendritic cells to enhance the CCL21/SLC-dependent migration of activated mature dendritic cells while attenuating their antigen-specific stimulatory capacities. In complex with alpha-actinins ACTN1 and ACTN4, regulates actin dynamics in the immune synapse and subsequent T-cell activation. Inhibits the entry of several viruses such as hepatitis C Virus (HCV) or HIV-1. Mechanistically, promotes a change in CD81 organization at the plasma membrane by significantly restricting its diffusion which in turn influences CD81 interaction with Claudin-1/CLDN1, preventing CLDN1 from acting as a co-receptor required for HCV entry. Accumulates at the presynaptic terminal, the producer cell side of the virological synapse, to prevent HIV-1 Env-mediated cell-cell fusion. Highly expressed on malignant cells with antigen presentation defects, interacts with NK receptor KIR3DL2 to suppress NK-cell cytotoxicity. May participate in the regulation of neurite outgrowth and maintenance of the neural network in the adult brain. The protein is Immunoglobulin superfamily member 8 (IGSF8) of Homo sapiens (Human).